Consider the following 483-residue polypeptide: Glycogen synthase (483 aa).

Lys15 provides a ligand contact to ADP-alpha-D-glucose.

It belongs to the glycosyltransferase 1 family. Bacterial/plant glycogen synthase subfamily.

It catalyses the reaction [(1-&gt;4)-alpha-D-glucosyl](n) + ADP-alpha-D-glucose = [(1-&gt;4)-alpha-D-glucosyl](n+1) + ADP + H(+). Its pathway is glycan biosynthesis; glycogen biosynthesis. Its function is as follows. Synthesizes alpha-1,4-glucan chains using ADP-glucose. The sequence is that of Glycogen synthase from Petrotoga mobilis (strain DSM 10674 / SJ95).